Reading from the N-terminus, the 267-residue chain is 2-keto-3-deoxy-L-rhamnonate aldolase (267 aa).

H49 acts as the Proton acceptor in catalysis. Q151 lines the substrate pocket. A Mg(2+)-binding site is contributed by E153. Substrate is bound by residues A178 and D179. Mg(2+) is bound at residue D179.

This sequence belongs to the HpcH/HpaI aldolase family. KDR aldolase subfamily. In terms of assembly, homohexamer. Mg(2+) serves as cofactor.

The enzyme catalyses 2-dehydro-3-deoxy-L-rhamnonate = (S)-lactaldehyde + pyruvate. Catalyzes the reversible retro-aldol cleavage of 2-keto-3-deoxy-L-rhamnonate (KDR) to pyruvate and lactaldehyde. The sequence is that of 2-keto-3-deoxy-L-rhamnonate aldolase from Escherichia coli (strain UTI89 / UPEC).